The chain runs to 144 residues: Large ribosomal subunit protein uL16 (144 aa).

This sequence belongs to the universal ribosomal protein uL16 family. In terms of assembly, part of the 50S ribosomal subunit.

Functionally, binds 23S rRNA and is also seen to make contacts with the A and possibly P site tRNAs. The sequence is that of Large ribosomal subunit protein uL16 from Bacillus pumilus (strain SAFR-032).